The sequence spans 507 residues: CWF19-like protein DRN1 (507 aa).

Phosphoserine is present on Ser-242.

The protein belongs to the CWF19 family. In terms of assembly, interacts with DBR1. Interacts with SYF1, a component of the NTC complex. Interacts with lariat-introns and lariat-intermediates.

It is found in the nucleus. It localises to the cytoplasm. In terms of biological role, involved in branched RNA metabolism, modulating the turnover of lariat-intron pre-mRNAs by the lariat-debranching enzyme DBR1. Enhances the debranching activity of DBR1 in vitro. The sequence is that of CWF19-like protein DRN1 (DRN1) from Saccharomyces cerevisiae (strain ATCC 204508 / S288c) (Baker's yeast).